The sequence spans 179 residues: Arginine repressor (179 aa).

Belongs to the ArgR family.

It localises to the cytoplasm. The protein operates within amino-acid biosynthesis; L-arginine biosynthesis [regulation]. Regulates arginine biosynthesis genes. This Renibacterium salmoninarum (strain ATCC 33209 / DSM 20767 / JCM 11484 / NBRC 15589 / NCIMB 2235) protein is Arginine repressor.